A 222-amino-acid polypeptide reads, in one-letter code: Flagellar L-ring protein (222 aa).

A signal peptide spans 1–18 (MRRPGAAALAAAALALAG). Residue Cys19 is the site of N-palmitoyl cysteine attachment. Cys19 carries the S-diacylglycerol cysteine lipid modification.

This sequence belongs to the FlgH family. In terms of assembly, the basal body constitutes a major portion of the flagellar organelle and consists of four rings (L,P,S, and M) mounted on a central rod.

It is found in the cell outer membrane. It localises to the bacterial flagellum basal body. In terms of biological role, assembles around the rod to form the L-ring and probably protects the motor/basal body from shearing forces during rotation. The chain is Flagellar L-ring protein from Burkholderia mallei (strain ATCC 23344).